Reading from the N-terminus, the 182-residue chain is MSVDVTNETQWVIDPKVFSDLGIWVLDQMRVSTQSDLTIMFVDPNPIAELHMRWMNLEGPTDVMSFPMDELRPGDGKTVMEGVLGDIVICPWVAAQQAAAAGHSTMQEMLLLTIHGILHLLGYDHVTPEQERQMFGLQRQLLLTFFALRHDANVQATLPAGTPDALALYDAAHGAGRDLDSK.

Positions 115, 119, and 125 each coordinate Zn(2+).

This sequence belongs to the endoribonuclease YbeY family. It depends on Zn(2+) as a cofactor.

Its subcellular location is the cytoplasm. Its function is as follows. Single strand-specific metallo-endoribonuclease involved in late-stage 70S ribosome quality control and in maturation of the 3' terminus of the 16S rRNA. This chain is Endoribonuclease YbeY, found in Bifidobacterium longum subsp. infantis (strain ATCC 15697 / DSM 20088 / JCM 1222 / NCTC 11817 / S12).